A 361-amino-acid polypeptide reads, in one-letter code: MAAAEEPKPKKLKVEAPQALSENVLFGMGNPLLDISAVVDKDFLDKYSLKPNDQILAEEKHKELFDELVRKFKVEYHAGGSTQNSIKVAQWMIQKPHKAATFFGCIGIDKFGEILKSKAAEAHVDAHYYEQNEQPTGTCAACITGDNRSLVANLAAANCYKKEKHLDLENNWVLVEKARVYYIAGFFLTVSPESVLKVARYAAENNRIFTLNLSAPFISQFFKESLMEVMPYVDILFGNETEAATFAREQGFETKDIKEIAKKAQALAKVNSKRPRTVVFTQGRDDTVVATENEVMAFAVLDQNQKEIIDTNGAGDAFVGGFLSQLVYNKPLTECIRAGHYAASVIIRRTGCTFPEKPDFH.

A Nuclear localization signal motif is present at residues 7 to 15; it reads PKPKKLKVE. Residue Asp34 coordinates adenosine. Ser48 lines the Mg(2+) pocket. Residue Tyr76 is modified to Phosphotyrosine. Mg(2+) contacts are provided by Asp146 and Asn147. Gln305 is an adenosine binding site. Asp316 is a catalytic residue. Residue Asp316 is the Proton acceptor of the active site.

This sequence belongs to the carbohydrate kinase PfkB family. Monomer. It depends on Mg(2+) as a cofactor. In terms of processing, the N-terminus is blocked.

The protein resides in the nucleus. It catalyses the reaction adenosine + ATP = AMP + ADP + H(+). Its pathway is purine metabolism; AMP biosynthesis via salvage pathway; AMP from adenosine: step 1/1. Activity is inhibited by 5-iodotubercidin and 5'-amino-5'-deoxyadenosine. Its function is as follows. Catalyzes the phosphorylation of the purine nucleoside adenosine at the 5' position in an ATP-dependent manner. Serves as a potential regulator of concentrations of extracellular adenosine and intracellular adenine nucleotides. The polypeptide is Adenosine kinase (ADK) (Cricetulus griseus (Chinese hamster)).